The sequence spans 276 residues: NH(3)-dependent NAD(+) synthetase (276 aa).

43-50 (GISGGVDS) is a binding site for ATP. Asp-49 serves as a coordination point for Mg(2+). Arg-146 provides a ligand contact to deamido-NAD(+). Thr-166 provides a ligand contact to ATP. Mg(2+) is bound at residue Glu-171. Deamido-NAD(+)-binding residues include Lys-179 and Asp-186. Residues Lys-195 and Thr-217 each contribute to the ATP site. 266 to 267 (HK) is a binding site for deamido-NAD(+).

This sequence belongs to the NAD synthetase family. In terms of assembly, homodimer.

It catalyses the reaction deamido-NAD(+) + NH4(+) + ATP = AMP + diphosphate + NAD(+) + H(+). It functions in the pathway cofactor biosynthesis; NAD(+) biosynthesis; NAD(+) from deamido-NAD(+) (ammonia route): step 1/1. Functionally, catalyzes the ATP-dependent amidation of deamido-NAD to form NAD. Uses ammonia as a nitrogen source. The sequence is that of NH(3)-dependent NAD(+) synthetase from Vibrio parahaemolyticus serotype O3:K6 (strain RIMD 2210633).